A 465-amino-acid polypeptide reads, in one-letter code: 3-isopropylmalate dehydratase large subunit (465 aa).

Residues Cys347, Cys407, and Cys410 each contribute to the [4Fe-4S] cluster site. Residues 416-443 (DTLRPGERSASTSNRNFEGRQGPGGRTH) form a disordered region.

It belongs to the aconitase/IPM isomerase family. LeuC type 1 subfamily. As to quaternary structure, heterodimer of LeuC and LeuD. The cofactor is [4Fe-4S] cluster.

The enzyme catalyses (2R,3S)-3-isopropylmalate = (2S)-2-isopropylmalate. It functions in the pathway amino-acid biosynthesis; L-leucine biosynthesis; L-leucine from 3-methyl-2-oxobutanoate: step 2/4. In terms of biological role, catalyzes the isomerization between 2-isopropylmalate and 3-isopropylmalate, via the formation of 2-isopropylmaleate. The protein is 3-isopropylmalate dehydratase large subunit of Frankia casuarinae (strain DSM 45818 / CECT 9043 / HFP020203 / CcI3).